Consider the following 262-residue polypeptide: Ribose-5-phosphate isomerase A (262 aa).

Substrate contacts are provided by residues 33 to 36 (TGST), 89 to 92 (DGAD), and 102 to 105 (KGGG). The active-site Proton acceptor is Glu111. Lys129 lines the substrate pocket.

It belongs to the ribose 5-phosphate isomerase family. As to quaternary structure, homodimer.

It catalyses the reaction aldehydo-D-ribose 5-phosphate = D-ribulose 5-phosphate. The protein operates within carbohydrate degradation; pentose phosphate pathway; D-ribose 5-phosphate from D-ribulose 5-phosphate (non-oxidative stage): step 1/1. In terms of biological role, catalyzes the reversible conversion of ribose-5-phosphate to ribulose 5-phosphate. In Roseobacter denitrificans (strain ATCC 33942 / OCh 114) (Erythrobacter sp. (strain OCh 114)), this protein is Ribose-5-phosphate isomerase A.